We begin with the raw amino-acid sequence, 845 residues long: MSSKQEIMDDQRFRRVSKDPRFWEMPEKERKVKIDKRFRAMFHDKKFKLNYAVDKRGRPISHSTTEDLKRFYDLSDSDSDLSDEESKILSQKKAKQKKKQTKKEAKSIEKPIEEKKKETKKTDQKDSINKHDLNNSERVQKMKNSQKPQKIDSEISPKKDNEEFLQNKKKKRGTTDLSVEALPKGKLRTKDSSTSEMVKSSTMSSSKAKREKQSVVPVIMAKDNDGKMPDEDALEEDSDSASELGSDEESEDEIISDGKTSADEDESEEEDEEEEEDSEEEEEEEEEDESDSGPDLARGKGNVETSSEDEDDLADLFPEEPGFEHAWRELDKDAPRADEITRRLAVCNMDWDRLKAKDLLALFNSFKPKGGVVFSVKIYPSEFGKERMKEEQVQGPVELLSIPEDAPEKDWASREKLRDYQFKRLKYYYAVAECDSPETASKIYEDCDGLEFESSCSFIDLRFIPDDITFDDEPKDVALEVDLTAYKPKYFTSAAMGTSTVEITWDETDHERITTLNRKFKKDELLDMDFQAYLASSSEDEEEVEEAPEGEEGVNIGEDGKTKKSQKDDEEQIAKYRQLLQVIQEKEKKGKENDMEMEIKWVPGLKESAEEMVKNKLEGKDKLTPWEQFLEKKKEKKRLKKKQKALAEEDSEDELPSDVDFNDPYFAEEVKKIGIKKKSMKSAKDSASSEEETDLEKQKAEMALLVMDEEEDSKKHFNYDKIVEHQNLSKKKKKQLMKKKELVEDDFEVNVSDARFQAMYTSHLFNLDPSDPNFKKTKAMEKILEEKARHRERKEELLIQAVERAQQDTGKPTQKQPMDPALSMLIKSVKNKTEQFQARKKQRVK.

At Ser2 the chain carries N-acetylserine. Disordered regions lie at residues 54 to 321 (DKRG…PEEP) and 536 to 570 (SSSE…KDDE). The segment covering 64 to 73 (TTEDLKRFYD) has biased composition (basic and acidic residues). 4 positions are modified to phosphoserine: Ser75, Ser77, Ser79, and Ser82. The span at 90–101 (SQKKAKQKKKQT) shows a compositional bias: basic residues. Composition is skewed to basic and acidic residues over residues 102–140 (KKEA…ERVQ) and 149–166 (QKID…EFLQ). 3 positions are modified to phosphoserine: Ser136, Ser156, and Ser200. Residues 194 to 206 (TSEMVKSSTMSSS) show a composition bias toward low complexity. Acidic residues-rich tracts occupy residues 231–255 (EDAL…DEII) and 263–292 (DEDE…ESDS). A phosphoserine mark is found at Ser290 and Ser292. Thr305 bears the Phosphothreonine mark. Residues Ser306 and Ser307 each carry the phosphoserine modification. Composition is skewed to acidic residues over residues 306 to 318 (SSED…DLFP) and 538 to 552 (SEDE…EGEE). The span at 558–567 (EDGKTKKSQK) shows a compositional bias: basic and acidic residues. Ser608 is subject to Phosphoserine. Positions 634-644 (KEKKRLKKKQK) are enriched in basic residues. 2 disordered regions span residues 634–660 (KEKK…SDVD) and 676–696 (KKKS…TDLE). The span at 648-660 (EEDSEDELPSDVD) shows a compositional bias: acidic residues. Phosphoserine is present on residues Ser651, Ser657, Ser686, Ser688, Ser689, and Ser729. A coiled-coil region spans residues 775–803 (KKTKAMEKILEEKARHRERKEELLIQAVE).

This sequence belongs to the ESF1 family. As to quaternary structure, interacts with ABT1. Forms a complex with ABT1 and suppresses the ABT1-induced activation of polymerase II-directed transcription in mammalian cells.

Its subcellular location is the nucleus. The protein localises to the nucleolus. The protein resides in the nucleoplasm. May constitute a novel regulatory system for basal transcription. Negatively regulates ABT1. In Mus musculus (Mouse), this protein is ESF1 homolog (Esf1).